Here is a 136-residue protein sequence, read N- to C-terminus: Large ribosomal subunit protein uL16 (136 aa).

It belongs to the universal ribosomal protein uL16 family. As to quaternary structure, part of the 50S ribosomal subunit.

In terms of biological role, binds 23S rRNA and is also seen to make contacts with the A and possibly P site tRNAs. The polypeptide is Large ribosomal subunit protein uL16 (Vibrio atlanticus (strain LGP32) (Vibrio splendidus (strain Mel32))).